Here is a 500-residue protein sequence, read N- to C-terminus: MLHETISLALLGQPLVPGLMVVSAILYLLYSTQQWRPKNLPLLNDAGPFDFLQATAVKRFRRDARQLIKSGFDSYNNVFAMRTDVGVELFASPEYADQFRNHPSLKVFPFTAKMHHGHLPGFELCRSQPVEDRILIESVRTQLAQSLGKMIQPLASDIGQAISDRWPSESGWQEIALGSVIERTIAQGTSSVYCLDEAWPEFVVKMEMALGMASAALSAWPVMLRRVVAKFLPECLELYRIMDAGRELMSRDMRRRVALQASTGEAPLNFFEWFKEASHGEEYDELILNLRIAFASMHGLCDHLVKILLRLSEDPQLVDDLRKEVIQVYKTHGWSKTALYHLKLMDSTFKEVQRVDPILFAVGRLAVADVALKDGLIIPKGQSIRISGHTMWDEDKYPDAAHFDAYRFYKLRQAPGQENTAQFTSPTSDHLGFGYGGRACPGRFFAAAVLKISLCHVLMKYDIKPANGETGPHVWEFAAAINANMTANVLVRRREPEIRL.

Residues 8–28 (LALLGQPLVPGLMVVSAILYL) form a helical membrane-spanning segment. Cys440 serves as a coordination point for heme.

Belongs to the cytochrome P450 family. The cofactor is heme.

The protein resides in the membrane. The protein operates within secondary metabolite biosynthesis; terpenoid biosynthesis. Its function is as follows. Cytochrome P450 monooxygenase; part of the gene cluster B that mediates the biosynthesis of the fungal meroterpenoid acetoxydehydroaustin. The first step of the pathway is the synthesis of 3,5-dimethylorsellinic acid by the polyketide synthase ausA. 3,5-dimethylorsellinic acid is then prenylated by the polyprenyl transferase ausN. Further epoxidation by the FAD-dependent monooxygenase ausM and cyclization by the probable terpene cyclase ausL lead to the formation of protoaustinoid A. Protoaustinoid A is then oxidized to spiro-lactone preaustinoid A3 by the combined action of the FAD-binding monooxygenases ausB and ausC, and the dioxygenase ausE. Acid-catalyzed keto-rearrangement and ring contraction of the tetraketide portion of preaustinoid A3 by ausJ lead to the formation of preaustinoid A4. The aldo-keto reductase ausK, with the help of ausH, is involved in the next step by transforming preaustinoid A4 into isoaustinone which is in turn hydroxylated by the P450 monooxygenase ausI to form austinolide. The cytochrome P450 monooxygenase ausG then modifies austinolide to austinol. Austinol is further acetylated to austin by the O-acetyltransferase ausP, which spontaneously changes to dehydroaustin. The cytochrome P450 monooxygenase then converts dehydroaustin is into 7-dehydrodehydroaustin. The hydroxylation catalyzed by ausR permits the second O-acetyltransferase ausQ to add an additional acetyl group to the molecule, leading to the formation of acetoxydehydroaustin. Due to genetic rearrangements of the clusters and the subsequent loss of some enzymes, the end product of the Penicillium brasilianum austinoid biosynthesis clusters is acetoxydehydroaustin. The polypeptide is Cytochrome P450 monooxygenase ausI (Penicillium brasilianum).